The following is a 432-amino-acid chain: Glutamate-1-semialdehyde 2,1-aminomutase (432 aa).

Lysine 272 is subject to N6-(pyridoxal phosphate)lysine.

This sequence belongs to the class-III pyridoxal-phosphate-dependent aminotransferase family. HemL subfamily. As to quaternary structure, homodimer. Requires pyridoxal 5'-phosphate as cofactor.

The protein resides in the cytoplasm. The enzyme catalyses (S)-4-amino-5-oxopentanoate = 5-aminolevulinate. Its pathway is porphyrin-containing compound metabolism; protoporphyrin-IX biosynthesis; 5-aminolevulinate from L-glutamyl-tRNA(Glu): step 2/2. The protein operates within porphyrin-containing compound metabolism; chlorophyll biosynthesis. This chain is Glutamate-1-semialdehyde 2,1-aminomutase, found in Trichodesmium erythraeum (strain IMS101).